The primary structure comprises 384 residues: 8-amino-7-oxononanoate synthase (384 aa).

R21 contributes to the substrate binding site. 108–109 (GF) is a pyridoxal 5'-phosphate binding site. Residue H133 coordinates substrate. Pyridoxal 5'-phosphate-binding residues include S179, H207, and T233. K236 is subject to N6-(pyridoxal phosphate)lysine. T352 provides a ligand contact to substrate.

This sequence belongs to the class-II pyridoxal-phosphate-dependent aminotransferase family. BioF subfamily. Homodimer. Requires pyridoxal 5'-phosphate as cofactor.

It catalyses the reaction 6-carboxyhexanoyl-[ACP] + L-alanine + H(+) = (8S)-8-amino-7-oxononanoate + holo-[ACP] + CO2. It participates in cofactor biosynthesis; biotin biosynthesis. In terms of biological role, catalyzes the decarboxylative condensation of pimeloyl-[acyl-carrier protein] and L-alanine to produce 8-amino-7-oxononanoate (AON), [acyl-carrier protein], and carbon dioxide. This is 8-amino-7-oxononanoate synthase from Escherichia coli O6:K15:H31 (strain 536 / UPEC).